A 248-amino-acid chain; its full sequence is 1-(5-phosphoribosyl)-5-[(5-phosphoribosylamino)methylideneamino] imidazole-4-carboxamide isomerase (248 aa).

D8 serves as the catalytic Proton acceptor. D131 functions as the Proton donor in the catalytic mechanism.

This sequence belongs to the HisA/HisF family.

The protein localises to the cytoplasm. The enzyme catalyses 1-(5-phospho-beta-D-ribosyl)-5-[(5-phospho-beta-D-ribosylamino)methylideneamino]imidazole-4-carboxamide = 5-[(5-phospho-1-deoxy-D-ribulos-1-ylimino)methylamino]-1-(5-phospho-beta-D-ribosyl)imidazole-4-carboxamide. It functions in the pathway amino-acid biosynthesis; L-histidine biosynthesis; L-histidine from 5-phospho-alpha-D-ribose 1-diphosphate: step 4/9. This Cupriavidus taiwanensis (strain DSM 17343 / BCRC 17206 / CCUG 44338 / CIP 107171 / LMG 19424 / R1) (Ralstonia taiwanensis (strain LMG 19424)) protein is 1-(5-phosphoribosyl)-5-[(5-phosphoribosylamino)methylideneamino] imidazole-4-carboxamide isomerase.